The sequence spans 246 residues: MAHILMKQLLEAGVHFGHQTKRWCPKMKEYIFSERNGIHIIDLQKTLVKLEEAYEFAKEQAKEGKTFLFVGTKKQAQQTIEEEAKRCGAFYVNQRWLGGMLTNFTTIKSRIDYMVKLEELKNNGYFEKLPKKQANRLNRELEKLVKVFDGLRGIEKLPDVLYIVDPKREEIAVKEANKLGIPIIAIVDTNCDPELITYPIPGNDDAIRSIKLITSKIADAILEGKDLREKEADLQLKDEDLQSEIS.

This sequence belongs to the universal ribosomal protein uS2 family.

This is Small ribosomal subunit protein uS2 from Dictyoglomus thermophilum (strain ATCC 35947 / DSM 3960 / H-6-12).